A 435-amino-acid chain; its full sequence is Estrogen-related receptor gamma (435 aa).

Residues 1–64 (MSNKDRHIDS…GLDSPPLYPS (64 aa)) form a disordered region. Positions 10–29 (SSCSSFIKTEPSSPASLTDS) are enriched in polar residues. A compositionally biased stretch (low complexity) spans 34 to 47 (SPGGSSDASGSYSS). A DNA-binding region (nuclear receptor) is located at residues 102–177 (KRLCLVCGDI…VGMLKEGVRL (76 aa)). 2 consecutive NR C4-type zinc fingers follow at residues 105–125 (CLVC…CEAC) and 141–160 (CPAT…CQAC). One can recognise an NR LBD domain in the interval 210 to 434 (PYNKIVSHLL…KLFSEMLEAK (225 aa)).

The protein belongs to the nuclear hormone receptor family. NR3 subfamily. As to quaternary structure, homodimer. Interacts with NRIP1, NCOA1 and NCOR2. Binds TLE1, PNRC1 and PNRC2. Binds GRIP1. In terms of processing, acetylated by PCAF/KAT2 (in vitro).

It localises to the nucleus. Orphan receptor that acts as a transcription activator in the absence of bound ligand. Binds specifically to an estrogen response element and activates reporter genes controlled by estrogen response elements. Induces the expression of PERM1 in the skeletal muscle. In Pongo abelii (Sumatran orangutan), this protein is Estrogen-related receptor gamma (ESRRG).